The chain runs to 83 residues: Putative defensin-like protein 257 (83 aa).

The first 25 residues, 1–25 (MMNVSLKLSFLVFILVIMSNLGSEA), serve as a signal peptide directing secretion. 3 disulfides stabilise this stretch: cysteine 57-cysteine 73, cysteine 63-cysteine 80, and cysteine 67-cysteine 82.

It belongs to the DEFL family.

The protein localises to the secreted. The sequence is that of Putative defensin-like protein 257 from Arabidopsis thaliana (Mouse-ear cress).